A 178-amino-acid polypeptide reads, in one-letter code: Probable host range protein 2 (178 aa).

It belongs to the poxviridae C7 protein family.

Plays a role for multiplication of the virus in different cell types. This chain is Probable host range protein 2, found in Yaba-like disease virus (YLDV).